A 317-amino-acid polypeptide reads, in one-letter code: Ribosome production factor 2 homolog (317 aa).

A Brix domain is found at 28 to 240 (KTAIFLRGNA…IRRVQPAESD (213 aa)). A disordered region spans residues 287 to 317 (MKGLKRSVEEREDSENEEVEIEEDVISDASE). Ser-293, Ser-300, Ser-313, and Ser-316 each carry phosphoserine. Residues 296-317 (EREDSENEEVEIEEDVISDASE) are compositionally biased toward acidic residues.

Belongs to the RPF2 family. In terms of assembly, component of a hexameric 5S RNP precursor complex, composed of 5S RNA, rrs1, rpf2, rpl5a/rpl5b, rpl11a/rpl11b and syo1; this complex acts as a precursor for ribosome assembly.

Its subcellular location is the nucleus. The protein resides in the nucleolus. This chain is Ribosome production factor 2 homolog, found in Schizosaccharomyces pombe (strain 972 / ATCC 24843) (Fission yeast).